Reading from the N-terminus, the 82-residue chain is Small ribosomal subunit protein uS17 (82 aa).

The protein belongs to the universal ribosomal protein uS17 family. In terms of assembly, part of the 30S ribosomal subunit.

In terms of biological role, one of the primary rRNA binding proteins, it binds specifically to the 5'-end of 16S ribosomal RNA. The chain is Small ribosomal subunit protein uS17 from Rickettsia rickettsii (strain Iowa).